Here is a 411-residue protein sequence, read N- to C-terminus: Pre-mRNA-splicing factor dre4 (411 aa).

The region spanning 3–36 (QPLPPGWTEHKAPSGIPYYWNAELKKSTYQRPSF) is the WW 1 domain. The tract at residues 65 to 84 (NAEERKNSRDLRKQLPDRPK) is disordered. A compositionally biased stretch (basic and acidic residues) spans 66–83 (AEERKNSRDLRKQLPDRP). The WW 2 domain occupies 89–122 (IPNNDSWVVVFTKKNRYFFHNLKSHESYWEPPLE). Positions 138 to 209 (ISKDSSQSQN…KSHSAEELEF (72 aa)) are disordered. A compositionally biased stretch (polar residues) spans 140 to 151 (KDSSQSQNVDSG). A compositionally biased stretch (basic and acidic residues) spans 152-166 (KTNHEEIHESRHLQT). The span at 167–179 (EIEEPSGLEESSE) shows a compositional bias: acidic residues. The FF domain occupies 239 to 293 (TDDARRVFTELLKDKNIGAYQPWELVYPKLLDDDRFYVLDSGERRKEVFEEYCKS).

In terms of assembly, component of the spliceosomal complex. Interacts with prp19.

It localises to the nucleus. Its function is as follows. Component of the spliceosome involved in mRNA processing. The protein is Pre-mRNA-splicing factor dre4 (dre4) of Schizosaccharomyces pombe (strain 972 / ATCC 24843) (Fission yeast).